The sequence spans 334 residues: N-acetyl-gamma-glutamyl-phosphate reductase (334 aa).

C154 is an active-site residue.

This sequence belongs to the NAGSA dehydrogenase family. Type 1 subfamily.

The protein resides in the cytoplasm. It catalyses the reaction N-acetyl-L-glutamate 5-semialdehyde + phosphate + NADP(+) = N-acetyl-L-glutamyl 5-phosphate + NADPH + H(+). Its pathway is amino-acid biosynthesis; L-arginine biosynthesis; N(2)-acetyl-L-ornithine from L-glutamate: step 3/4. Catalyzes the NADPH-dependent reduction of N-acetyl-5-glutamyl phosphate to yield N-acetyl-L-glutamate 5-semialdehyde. This is N-acetyl-gamma-glutamyl-phosphate reductase from Vibrio vulnificus (strain YJ016).